A 313-amino-acid chain; its full sequence is D-alanine--D-alanine ligase (313 aa).

In terms of domain architecture, ATP-grasp spans 108 to 308 (KLVWQQTGVP…YSELVVKVLS (201 aa)). 138–193 (VAKLGLPLFVKPASEGSSVAVLKVKTADALPAALEEAATHDKIVIVEKSIEGGGEY) serves as a coordination point for ATP. Asp-262, Glu-275, and Asn-277 together coordinate Mg(2+).

Belongs to the D-alanine--D-alanine ligase family. Mg(2+) serves as cofactor. Requires Mn(2+) as cofactor.

The protein resides in the cytoplasm. The catalysed reaction is 2 D-alanine + ATP = D-alanyl-D-alanine + ADP + phosphate + H(+). Its pathway is cell wall biogenesis; peptidoglycan biosynthesis. In terms of biological role, cell wall formation. The protein is D-alanine--D-alanine ligase of Burkholderia cenocepacia (strain ATCC BAA-245 / DSM 16553 / LMG 16656 / NCTC 13227 / J2315 / CF5610) (Burkholderia cepacia (strain J2315)).